The following is a 687-amino-acid chain: MPYKINRMKNSLEINETGGTLLVDERKRLRIGELYRYKFSVNKDVIKEQGLDVSHLFLRIKNEESALLRPLYLTGPYSFYIDVRPHNYNENRKFPGKEIIPFVENLKPDERFKVKILLNENSRVGDTSLYSWTIDIISQLAVTTIPKLEFSFRIGTTRKVVKKSNGLFKSIEGVSLEMWDTETLWDLPPKFPEKPVHLVIMTHGIFSNIGCDMLYMKDKIEEMTFPMDESINPNIIVRGFMGNVGKSGHGIHCLGVRVGKYVLETVDKLNKKYKVDRISFIGHSLGGPTQSMAVRYISIKRPDFFDAVKGVKPVNFITLASPFIGVIGDFPFYLSVPLDMGALGLTGRDLNLKYTPLTSKDGLYADDEVYPEHSKYILEILPQAPAKKVFESFKRRTIYANVMDDGIVPLRTAALLYLDWRSIHKVQKIRKKNKNSPTSSEFVSSDSPESSGASSPSNENGNNVGEIPAESPNKKATLQWTLPQAVIHGSKINKYKRGQTNEANSDSDNEQGVFLDGQKFEPPKEANTVLSALSVLTAAIPDQEYIKNPAVRKDEVIHDKLYHPEELPPPHYENRPIVKKLIYPNESVNRIQERIAREWQETMTWRKVLVQIQPDSHNNIVVRRRFVNLYGYVAVEHMVEHHFGSKVCSELAEDANEPKDEPNQSSQADRSNEYNEGEISKGAENAT.

S284 (charge relay system) is an active-site residue. Disordered regions lie at residues 429 to 472 (IRKK…AESP), 491 to 513 (KINK…EQGV), and 650 to 687 (ELAE…ENAT). The segment covering 436–463 (SPTSSEFVSSDSPESSGASSPSNENGNN) has biased composition (low complexity). The segment covering 670 to 681 (RSNEYNEGEISK) has biased composition (basic and acidic residues).

The protein belongs to the putative lipase ROG1 family.

It is found in the cytoplasm. In Saccharomyces cerevisiae (strain ATCC 204508 / S288c) (Baker's yeast), this protein is Putative lipase YDR444W.